We begin with the raw amino-acid sequence, 146 residues long: Hemoglobin subunit theta (146 aa).

One can recognise a Globin domain in the interval 2–146 (HFTAEEKSVI…VATALAHKYH (145 aa)). Residues His-63 and His-92 each contribute to the heme b site.

The protein belongs to the globin family.

This chain is Hemoglobin subunit theta, found in Sus scrofa (Pig).